We begin with the raw amino-acid sequence, 120 residues long: Ribosome-binding factor A (120 aa).

This sequence belongs to the RbfA family. Monomer. Binds 30S ribosomal subunits, but not 50S ribosomal subunits or 70S ribosomes.

The protein localises to the cytoplasm. Its function is as follows. One of several proteins that assist in the late maturation steps of the functional core of the 30S ribosomal subunit. Associates with free 30S ribosomal subunits (but not with 30S subunits that are part of 70S ribosomes or polysomes). Required for efficient processing of 16S rRNA. May interact with the 5'-terminal helix region of 16S rRNA. This Rickettsia conorii (strain ATCC VR-613 / Malish 7) protein is Ribosome-binding factor A.